The following is a 141-amino-acid chain: Putative nickel-responsive regulator (141 aa).

Positions 80, 91, 93, and 99 each coordinate Ni(2+).

Belongs to the transcriptional regulatory CopG/NikR family. The cofactor is Ni(2+).

Its function is as follows. Transcriptional regulator. The sequence is that of Putative nickel-responsive regulator from Methanococcus vannielii (strain ATCC 35089 / DSM 1224 / JCM 13029 / OCM 148 / SB).